Consider the following 153-residue polypeptide: Myosin regulatory light chain LC-2, mantle muscle (153 aa).

Ala-1 is subject to Blocked amino end (Ala). EF-hand domains follow at residues 13–48 and 82–117; these read RQMQELKEAFTMIDQDRDGFIGMEDLKDMFSSLGRV and DPEDALRNAFSMFDEDGQGFIPEDYLKDLLENMGDN. Positions 26, 28, 30, and 37 each coordinate Ca(2+).

In molluscan muscle, calcium regulation is associated with myosin rather than with actin. Muscle myosin contains two types of light chains: the catalytic light chain, essential for ATPase activity, and the regulatory light chain, a calcium-binding protein responsible for Ca(2+) dependent binding and Ca(2+) dependent Mg-ATPase activity. The polypeptide is Myosin regulatory light chain LC-2, mantle muscle (Todarodes pacificus (Japanese flying squid)).